The following is a 623-amino-acid chain: Kelch-like protein diablo (623 aa).

Residues 1–54 (MGDLPGSGSTAQPRDAAVTGTGGNSTAGGGSSVGSTAVDRPPSPARLSHTSEKH) are disordered. A Phosphothreonine modification is found at Thr-19. Residues 20–32 (GTGGNSTAGGGSS) show a composition bias toward gly residues. Residues 72-139 (CDVVLNVGGR…CYTAHIMVEE (68 aa)) form the BTB domain. The BACK domain maps to 174–276 (CLGIRAFADT…SPKFLVGTVG (103 aa)). 6 Kelch repeats span residues 323–369 (VLFA…VLND), 371–417 (LYAV…VLDG), 418–464 (FLYA…VLGG), 466–511 (LYAI…VFNN), 513–558 (IYAV…VVNG), and 559–605 (QLYA…VMRA).

Its pathway is protein modification; protein ubiquitination. In terms of biological role, probable substrate-specific adapter of an E3 ubiquitin-protein ligase complex which mediates the ubiquitination and subsequent proteasomal degradation of target proteins. May have a role in synapse differentiation and growth. This is Kelch-like protein diablo from Drosophila erecta (Fruit fly).